Reading from the N-terminus, the 104-residue chain is V-type ATP synthase subunit F (104 aa).

The protein belongs to the V-ATPase F subunit family.

Functionally, produces ATP from ADP in the presence of a proton gradient across the membrane. The chain is V-type ATP synthase subunit F (atpF) from Thermus thermophilus (strain ATCC 27634 / DSM 579 / HB8).